Reading from the N-terminus, the 195-residue chain is Imidazoleglycerol-phosphate dehydratase (195 aa).

Belongs to the imidazoleglycerol-phosphate dehydratase family.

It is found in the cytoplasm. It carries out the reaction D-erythro-1-(imidazol-4-yl)glycerol 3-phosphate = 3-(imidazol-4-yl)-2-oxopropyl phosphate + H2O. It participates in amino-acid biosynthesis; L-histidine biosynthesis; L-histidine from 5-phospho-alpha-D-ribose 1-diphosphate: step 6/9. The polypeptide is Imidazoleglycerol-phosphate dehydratase (Burkholderia lata (strain ATCC 17760 / DSM 23089 / LMG 22485 / NCIMB 9086 / R18194 / 383)).